The following is a 233-amino-acid chain: Glucosamine-6-phosphate deaminase (233 aa).

The active-site Proton acceptor; for enolization step is the D62. The active-site For ring-opening step is N128. H130 serves as the catalytic Proton acceptor; for ring-opening step. E135 functions as the For ring-opening step in the catalytic mechanism.

Belongs to the glucosamine/galactosamine-6-phosphate isomerase family. NagB subfamily.

It carries out the reaction alpha-D-glucosamine 6-phosphate + H2O = beta-D-fructose 6-phosphate + NH4(+). It participates in amino-sugar metabolism; N-acetylneuraminate degradation; D-fructose 6-phosphate from N-acetylneuraminate: step 5/5. Its function is as follows. Catalyzes the reversible isomerization-deamination of glucosamine 6-phosphate (GlcN6P) to form fructose 6-phosphate (Fru6P) and ammonium ion. The polypeptide is Glucosamine-6-phosphate deaminase (Streptococcus agalactiae serotype Ia (strain ATCC 27591 / A909 / CDC SS700)).